A 570-amino-acid chain; its full sequence is Probable D-xylulose kinase A (570 aa).

Substrate contacts are provided by histidine 98, aspartate 279, and asparagine 280. ATP is bound by residues tryptophan 363, 470 to 471, and asparagine 474; that span reads GG.

It belongs to the FGGY kinase family.

It is found in the cytoplasm. The enzyme catalyses D-xylulose + ATP = D-xylulose 5-phosphate + ADP + H(+). Functionally, highly specific D-xylulose kinase which participates in the catabolism of xylose. Xylose is a major component of hemicelluloses such as xylan. Most fungi utilize D-xylose via three enzymatic reactions, xylose reductase (XR), xylitol dehydrogenase (XDH), and xylulokinase, to form xylulose 5-phosphate, which enters pentose phosphate pathway. This is Probable D-xylulose kinase A (xkiA) from Arthroderma otae (strain ATCC MYA-4605 / CBS 113480) (Microsporum canis).